The following is a 789-amino-acid chain: Disintegrin and metalloproteinase domain-containing protein 1 (789 aa).

The first 68 residues, 1 to 68 (MSVAASASRS…LLIFLPSTLC (68 aa)), serve as a signal peptide directing secretion. A Peptidase M12B domain is found at 238 to 432 (KYVEMFVVVN…HRGACLLDRP (195 aa)). The N-linked (GlcNAc...) asparagine glycan is linked to N259. 4 disulfide bridges follow: C348–C427, C388–C411, C390–C396, and C497–C517. H373 is a Zn(2+) binding site. Residue E374 is part of the active site. Residues H377 and H383 each coordinate Zn(2+). An N-linked (GlcNAc...) asparagine glycan is attached at N410. The 85-residue stretch at 441–525 (DAHCGNGVVE…ECPANSYMQD (85 aa)) folds into the Disintegrin domain. Residue N633 is glycosylated (N-linked (GlcNAc...) asparagine). Residues 666–700 (LQYDCHPQEMCHGNGVCNNFKHCHCDAGFSPPDCS) enclose the EGF-like domain. Cystine bridges form between C670/C682, C676/C688, and C690/C699. N-linked (GlcNAc...) asparagine glycosylation is present at N720. The chain crosses the membrane as a helical span at residues 743–763 (VVVLVVPIFLIVLLCCLMLIA). The Cytoplasmic segment spans residues 764–789 (YLWSEVQEAVSPGSSSTTSSSESESD).

As to quaternary structure, heterodimer with ADAM2/fertilin subunit beta.

The protein resides in the membrane. Functionally, may be involved in sperm-egg fusion. This is Disintegrin and metalloproteinase domain-containing protein 1 (Adam1) from Rattus norvegicus (Rat).